A 365-amino-acid chain; its full sequence is Chorismate synthase (365 aa).

The NADP(+) site is built by R48 and R54. FMN is bound by residues 131–133 (RSS), 243–244 (NA), G288, 303–307 (KPTSS), and R329.

The protein belongs to the chorismate synthase family. As to quaternary structure, homotetramer. FMNH2 is required as a cofactor.

It catalyses the reaction 5-O-(1-carboxyvinyl)-3-phosphoshikimate = chorismate + phosphate. Its pathway is metabolic intermediate biosynthesis; chorismate biosynthesis; chorismate from D-erythrose 4-phosphate and phosphoenolpyruvate: step 7/7. Its function is as follows. Catalyzes the anti-1,4-elimination of the C-3 phosphate and the C-6 proR hydrogen from 5-enolpyruvylshikimate-3-phosphate (EPSP) to yield chorismate, which is the branch point compound that serves as the starting substrate for the three terminal pathways of aromatic amino acid biosynthesis. This reaction introduces a second double bond into the aromatic ring system. The sequence is that of Chorismate synthase from Rhizobium etli (strain CIAT 652).